The primary structure comprises 368 residues: Chaperone protein DnaJ (368 aa).

The region spanning D5–G69 is the J domain. The CR-type zinc finger occupies G126–K208. The Zn(2+) site is built by C139, C142, C156, C159, C182, C185, C196, and C199. 4 CXXCXGXG motif repeats span residues C139–G146, C156–G163, C182–G189, and C196–G203.

Belongs to the DnaJ family. As to quaternary structure, homodimer. The cofactor is Zn(2+).

It is found in the cytoplasm. Functionally, participates actively in the response to hyperosmotic and heat shock by preventing the aggregation of stress-denatured proteins and by disaggregating proteins, also in an autonomous, DnaK-independent fashion. Unfolded proteins bind initially to DnaJ; upon interaction with the DnaJ-bound protein, DnaK hydrolyzes its bound ATP, resulting in the formation of a stable complex. GrpE releases ADP from DnaK; ATP binding to DnaK triggers the release of the substrate protein, thus completing the reaction cycle. Several rounds of ATP-dependent interactions between DnaJ, DnaK and GrpE are required for fully efficient folding. Also involved, together with DnaK and GrpE, in the DNA replication of plasmids through activation of initiation proteins. The chain is Chaperone protein DnaJ from Exiguobacterium sp. (strain ATCC BAA-1283 / AT1b).